The sequence spans 480 residues: Proline--tRNA ligase (480 aa).

Belongs to the class-II aminoacyl-tRNA synthetase family. ProS type 3 subfamily. In terms of assembly, homodimer.

It is found in the cytoplasm. It catalyses the reaction tRNA(Pro) + L-proline + ATP = L-prolyl-tRNA(Pro) + AMP + diphosphate. Functionally, catalyzes the attachment of proline to tRNA(Pro) in a two-step reaction: proline is first activated by ATP to form Pro-AMP and then transferred to the acceptor end of tRNA(Pro). In Roseiflexus sp. (strain RS-1), this protein is Proline--tRNA ligase.